A 474-amino-acid polypeptide reads, in one-letter code: Putative matrix metalloproteinase (474 aa).

An N-terminal signal peptide occupies residues 1-17 (MIIYFAVITCSLKLCRS). H189 provides a ligand contact to Zn(2+). The active site involves E190. The Zn(2+) site is built by H193 and H199. A Hemopexin repeat occupies 299-344 (AGVYDAISYVRGDLYVFVGDLHWRFDTSGMLHNGYPQPTGATWRLP).

This sequence belongs to the peptidase M10A family. It depends on Zn(2+) as a cofactor.

This chain is Putative matrix metalloproteinase, found in Heliothis virescens ascovirus 3e (HvAV-3e).